The chain runs to 1123 residues: RNA-binding protein 6 (1123 aa).

2 disordered regions span residues 1 to 391 (MWGD…EGGL) and 413 to 454 (LPGS…EEKP). Position 17 is a phosphoserine (S17). A Glycyl lysine isopeptide (Lys-Gly) (interchain with G-Cter in SUMO2) cross-link involves residue K36. The segment covering 79–97 (DGPHGDYRGGEGPGHDFRG) has biased composition (basic and acidic residues). Over residues 98-114 (GDFSSSDFQSRDSSQLD) the composition is skewed to low complexity. Basic and acidic residues-rich tracts occupy residues 115–131 (FRGRDIHSGDFRDREGP) and 145–237 (YRGR…DFRG). S240 carries the post-translational modification Phosphoserine. Basic and acidic residues-rich tracts occupy residues 245-286 (LDFR…REMP) and 301-323 (QDREHSGMNVNRREESTHDHTIE). Residue K331 forms a Glycyl lysine isopeptide (Lys-Gly) (interchain with G-Cter in SUMO2) linkage. Basic and acidic residues predominate over residues 332 to 354 (GEFEHSETREGETQGVAFEHESP). T344 is subject to Phosphothreonine. Residues 356-365 (DFQNSQSPVQ) show a composition bias toward polar residues. Phosphoserine is present on residues S360 and S362. 2 stretches are compositionally biased toward basic and acidic residues: residues 366–391 (DQDKSQLSGREEQSSDAGLFKEEGGL) and 431–454 (KTARDAQRDLQDQDYRTGPSEEKP). Residues K386, K453, K469, and K569 each participate in a glycyl lysine isopeptide (Lys-Gly) (interchain with G-Cter in SUMO2) cross-link. The RRM domain maps to 456 to 536 (RLIRLSGVPE…KEVTLEYVSS (81 aa)). Disordered stretches follow at residues 574 to 654 (TYPQ…QDGE), 741 to 787 (KRRN…QSSS), and 827 to 948 (EEEI…EEDK). Basic and acidic residues-rich tracts occupy residues 597 to 654 (PADK…QDGE) and 742 to 754 (RRNDSGDHSDHMH). Residues 772-787 (SDWSSDTNRQGQQSSS) are compositionally biased toward polar residues. Basic and acidic residues predominate over residues 843-860 (SKKEMSKRDGKEKKDRGV). Residues K871, K879, and K887 each participate in a glycyl lysine isopeptide (Lys-Gly) (interchain with G-Cter in SUMO2) cross-link. S891 carries the phosphoserine modification. The span at 910–922 (GDSDYEEEEEEEQ) shows a compositional bias: acidic residues. Positions 934–948 (QKREEQTKKENEEDK) are enriched in basic and acidic residues. Glycyl lysine isopeptide (Lys-Gly) (interchain with G-Cter in SUMO2) cross-links involve residues K935, K948, K991, and K1019. Basic and acidic residues predominate over residues 1004-1051 (EREGKFKGRGNDRREKLQSFDSPERKRIKYSRETDSDRKLVDKEDIDT). The interval 1004-1106 (EREGKFKGRG…RTSKRQSNET (103 aa)) is disordered. Phosphoserine is present on residues S1022 and S1025. Glycyl lysine isopeptide (Lys-Gly) (interchain with G-Cter in SUMO2) cross-links involve residues K1042, K1046, and K1066. Positions 1051–1097 (TSSKGGCVQQATGWRKGTGLGYGHPGLASSEEAEGRMRGPSVGASGR) constitute a G-patch domain.

In terms of assembly, may interact with FAM168B. In terms of tissue distribution, ubiquitous in adults.

It localises to the nucleus. Its function is as follows. Specifically binds poly(G) RNA homopolymers in vitro. In Homo sapiens (Human), this protein is RNA-binding protein 6 (RBM6).